Consider the following 1219-residue polypeptide: Myosin-5 (1219 aa).

The segment covering 1–12 has biased composition (basic residues); it reads MAILKRGARKKV. Residues 1–20 are disordered; it reads MAILKRGARKKVHQEPAKRS. A Myosin motor domain is found at 36 to 715; it reads VGVSDLTLLS…TLFALEHMRD (680 aa). 129-136 lines the ATP pocket; the sequence is GESGAGKT. Ser-357 bears the Phosphoserine mark. Position 359 is a phosphotyrosine (Tyr-359). The tract at residues 404–486 is actin-binding; that stretch reads SIGILDIYGF…PGIFAAMNDS (83 aa). IQ domains are found at residues 719–739 and 740–765; these read HNMA…RIDA and ATKI…YGTK. Positions 771–961 constitute a TH1 domain; it reads KERRSMSLLG…TISVRRGNPP (191 aa). Ser-777 carries the post-translational modification Phosphoserine. Residues 951 to 964 show a composition bias toward polar residues; it reads STISVRRGNPPNSQ. Disordered regions lie at residues 951 to 1106 and 1139 to 1167; these read STIS…SELP and TAYM…VLNS. A compositionally biased stretch (low complexity) spans 974–984; sequence SISSGYHASSS. Position 992 is a phosphoserine (Ser-992). Residues 1030 to 1041 are compositionally biased toward polar residues; sequence NPASTLTASQSN. Residues 1048-1063 are compositionally biased toward low complexity; the sequence is TAATRATPAATPAAAA. Over residues 1072–1083 the composition is skewed to pro residues; that stretch reads IPPPPPPPPPSS. Residues 1085-1147 enclose the SH3 domain; the sequence is PKEPMFEAAY…PTAYMKPHSG (63 aa). The residue at position 1205 (Ser-1205) is a Phosphoserine.

This sequence belongs to the TRAFAC class myosin-kinesin ATPase superfamily. Myosin family. In terms of assembly, interacts (via myosin motor domain) with SHE4; this interaction is important for proper localization and may regulate the interaction of the motor domain with actin. Interacts (via SH3 domain) with VRP1; this interaction is required for localization to sites of polarized growth and may regulate the interaction of the tail domain with actin. Interacts (via SH3 domain) with PAN1; this interaction is important for late stages of endocytopsis. Interacts (via SH3 domain) with BBC1 and LAS17. Interacts (via C-terminal acidic tail) with ARC19 and ARC40; ARC19 and ARC40 are Arp2/3 complex subunits. Interacts with BZZ1, PKH1, PKH2, YPK1 and YPK2. Post-translationally, phosphorylation of the TEDS site (Ser-357) is required for the polarization of the actin cytoskeleton and for ligand-induced, but not for constitutive internalization of STE2. Phosphorylation probably activates the myosin-I ATPase activity. Ser-357 is phosphorylated by YPK2 in vitro.

Its subcellular location is the cytoplasm. It localises to the cytoskeleton. The protein resides in the actin patch. Functionally, one of two redundant type-I myosins implicated in the organization of the actin cytoskeleton. Required for proper actin cytoskeleton polarization and for the internalization step in endocytosis. At the cell cortex, assembles in patch-like structures together with proteins from the actin-polymerizing machinery and promotes actin assembly. Functions redundantly with LAS17 as actin nucleation-promoting factor (NPF) for the Arp2/3 complex. Motor domain phosphorylation by PAK kinases CLA4 and STE20 promotes CDC42-regulated actin assembly. Functions together with the NPF PAN1 in late stages of endocytosis. Motor domain phosphorylation by PDK1 kinases PKH1 and PKH2, and by SGK kinases YPK1 and YPK2, promotes ligand-induced, but not constitutive endocytosis of the G protein-coupled receptor STE2. In Saccharomyces cerevisiae (strain YJM789) (Baker's yeast), this protein is Myosin-5 (MYO5).